A 788-amino-acid chain; its full sequence is Protein HID1 (788 aa).

G2 is lipidated: N-myristoyl glycine. The span at 297–313 (ATSTSPTVDGTTTGTAM) shows a compositional bias: low complexity. Disordered regions lie at residues 297 to 316 (ATST…MDDA) and 571 to 680 (PPSI…QWSP). 2 stretches are compositionally biased toward polar residues: residues 590–600 (RTGSQEGTSME) and 643–680 (PESQ…QWSP). S653 and S670 each carry phosphoserine.

The protein belongs to the hid-1 family.

It is found in the cytoplasm. It localises to the golgi apparatus membrane. The sequence is that of Protein HID1 (Hid1) from Mus musculus (Mouse).